Consider the following 332-residue polypeptide: MREDTKVYDITIIGGGPVGLFTAFYGGMRQASVKIIESLPQLGGQLSALYPEKYIYDVAGFPKIRAQELINNLKEQMAKFDQTICLEQAVESVEKQADGVFKLVTNEETHYSKTVIITAGNGAFKPRKLELENAEQYEGKNLHYFVDDLQKFAGRRVAILGGGDSAVDWALMLEPIAKEVSIIHRRDKFRAHEHSVENLHASKVNVLTPFVPAELIGEDKIEQLVLEEVKGDRKEILEIDDLIVNYGFVSSLGPIKNWGLDIEKNSIVVKSTMETNIEGFFAAGDICTYEGKVNLIASGFGEAPTAVNNAKAYMDPKARVQPLHSTSLFENK.

FAD is bound by residues glutamate 37, glutamine 45, tyrosine 50, valine 90, phenylalanine 124, aspartate 285, and threonine 326.

This sequence belongs to the ferredoxin--NADP reductase type 2 family. In terms of assembly, homodimer. The cofactor is FAD.

The enzyme catalyses 2 reduced [2Fe-2S]-[ferredoxin] + NADP(+) + H(+) = 2 oxidized [2Fe-2S]-[ferredoxin] + NADPH. The polypeptide is Ferredoxin--NADP reductase 2 (yumC) (Bacillus subtilis (strain 168)).